Consider the following 1251-residue polypeptide: MRRGGWRKRAENDGWETWGGYMAAKVQKLEEQFRSDAAMQKDGTSSTIFSGVAIYVNGYTDPSAEELRKLMMLHGGQYHVYYSRSKTTHIIATNLPNAKIKELKGEKVIRPEWIVESIKAGRLLSYIPYQLYTKQSSVQKGLSFNPVCRPEDPLPGPSNIAKQLNNRVNHIVKKIETENEVKVNGMNSWNEEDENNDFSFVDLEQTSPGRKQNGIPHPRGSTAIFNGHTPSSNGALKTQDCLVPMVNSVASRLSPAFSQEEDKAEKSSTDFRDCTLQQLQQSTRNTDALRNPHRTNSFSLSPLHSNTKINGAHHSTVQGPSSTKSTSSVSTFSKAAPSVPSKPSDCNFISNFYSHSRLHHISMWKCELTEFVNTLQRQSNGIFPGREKLKKMKTGRSALVVTDTGDMSVLNSPRHQSCIMHVDMDCFFVSVGIRNRPDLKGKPVAVTSNRGTGRAPLRPGANPQLEWQYYQNKILKGKAADIPDSSLWENPDSAQANGIDSVLSRAEIASCSYEARQLGIKNGMFFGHAKQLCPNLQAVPYDFHAYKEVAQTLYETLASYTHNIEAVSCDEALVDITEILAETKLTPDEFANAVRMEIKDQTKCAASVGIGSNILLARMATRKAKPDGQYHLKPEEVDDFIRGQLVTNLPGVGHSMESKLASLGIKTCGDLQYMTMAKLQKEFGPKTGQMLYRFCRGLDDRPVRTEKERKSVSAEINYGIRFTQPKEAEAFLLSLSEEIQRRLEATGMKGKRLTLKIMVRKPGAPVETAKFGGHGICDNIARTVTLDQATDNAKIIGKAMLNMFHTMKLNISDMRGVGIHVNQLVPTNLNPSTCPSRPSVQSSHFPSGSYSVRDVFQVQKAKKSTEEEHKEVFRAAVDLEISSASRTCTFLPPFPAHLPTSPDTNKAESSGKWNGLHTPVSVQSRLNLSIEVPSPSQLDQSVLEALPPDLREQVEQVCAVQQAESHGDKKKEPVNGCNTGILPQPVGTVLLQIPEPQESNSDAGINLIALPAFSQVDPEVFAALPAELQRELKAAYDQRQRQGENSTHQQSASASVPKNPLLHLKAAVKEKKRNKKKKTIGSPKRIQSPLNNKLLNSPAKTLPGACGSPQKLIDGFLKHEGPPAEKPLEELSASTSGVPGLSSLQSDPAGCVRPPAPNLAGAVEFNDVKTLLREWITTISDPMEEDILQVVKYCTDLIEEKDLEKLDLVIKYMKRLMQQSVESVWNMAFDFILDNVQVVLQQTYGSTLKVT.

The BRCT domain maps to 44 to 131 (TSSTIFSGVA…RLLSYIPYQL (88 aa)). 2 disordered regions span residues 206–236 (TSPG…NGAL) and 282–342 (STRN…VPSK). A compositionally biased stretch (polar residues) spans 282 to 320 (STRNTDALRNPHRTNSFSLSPLHSNTKINGAHHSTVQGP). A compositionally biased stretch (low complexity) spans 321 to 342 (SSTKSTSSVSTFSKAAPSVPSK). The interaction with target DNA stretch occupies residues 352 to 362 (FYSHSRLHHIS). DCTP contacts are provided by residues Arg-357, 423–427 (DMDCF), 510–516 (SCSYEAR), Asn-522, and Asp-570. Residues 419 to 653 (IMHVDMDCFF…QLVTNLPGVG (235 aa)) form the UmuC domain. A Mg(2+)-binding site is contributed by Asp-423. Mg(2+) contacts are provided by Asp-570 and Glu-571. Interaction with target DNA stretches follow at residues 653–656 (GHSM) and 709–717 (RKSVSAEIN). Disordered regions lie at residues 1035-1096 (AYDQ…KLLN) and 1119-1147 (HEGP…LQSD). The span at 1043 to 1056 (GENSTHQQSASASV) shows a compositional bias: polar residues. Basic residues predominate over residues 1070 to 1079 (EKKRNKKKKT). Positions 1071 to 1078 (KKRNKKKK) match the Nuclear localization signal motif. Positions 1119-1129 (HEGPPAEKPLE) are enriched in basic and acidic residues. Residues 1132–1146 (SASTSGVPGLSSLQS) are compositionally biased toward polar residues. The tract at residues 1150 to 1249 (GCVRPPAPNL…LQQTYGSTLK (100 aa)) is protein interaction domain; mediates interaction with DNA polymerase zeta.

The protein belongs to the DNA polymerase type-Y family. In terms of assembly, monomer. Interacts with the DNA polymerase zeta which is composed of REV3L and MAD2L2; the interaction with MAD2L2 is direct and requires that REV3L is in its closed conformation. Interacts with POLH, POLI and POLK. May bind ITGA3. Interacts with FAAP20/C1orf86. As to expression, ubiquitous.

It localises to the nucleus. Functionally, deoxycytidyl transferase involved in DNA repair. Transfers a dCMP residue from dCTP to the 3'-end of a DNA primer in a template-dependent reaction. May assist in the first step in the bypass of abasic lesions by the insertion of a nucleotide opposite the lesion. Required for normal induction of mutations by physical and chemical agents. This chain is DNA repair protein REV1 (REV1), found in Homo sapiens (Human).